The chain runs to 128 residues: Sm-like protein LSM1B (128 aa).

A Sm domain is found at 10-85; the sequence is YLSTSLASYL…VVLIGELDTE (76 aa).

It belongs to the snRNP Sm proteins family. Component of the heptameric LSM1-LSM7 complex that forms a seven-membered ring structure with a donut shape. The LSM subunits are arranged in the order LSM1, LSM2, LSM3, LSM6, LSM5, LSM7 and LSM4. LSM1B subunit interacts only with its two neighboring subunits, LSM2 and LSM4. Expressed in roots, leaves, stems, flowers and siliques.

It is found in the cytoplasm. The protein resides in the P-body. In terms of biological role, component of the cytoplasmic LSM1-LSM7 complex which is involved in mRNA degradation by promoting decapping and leading to accurate 5'-3' mRNA decay. LSM1A and LSM1B are essential for the formation of the cytoplasmic LSM1-LSM7 complex which regulates developmental gene expression by the decapping of specific development-related transcripts. Required for P-body formation during heat stress. The polypeptide is Sm-like protein LSM1B (Arabidopsis thaliana (Mouse-ear cress)).